The primary structure comprises 294 residues: Protease HtpX (294 aa).

Helical transmembrane passes span 4–24 and 33–53; these read ILLF…ILFI and FGLI…SLLL. A Zn(2+)-binding site is contributed by His-139. The active site involves Glu-140. His-143 is a binding site for Zn(2+). The next 2 membrane-spanning stretches (helical) occupy residues 147-167 and 197-217; these read GDMI…IFLS and FFIS…ITFW. A Zn(2+)-binding site is contributed by Glu-223.

Belongs to the peptidase M48B family. It depends on Zn(2+) as a cofactor.

It localises to the cell membrane. This is Protease HtpX from Wigglesworthia glossinidia brevipalpis.